A 138-amino-acid polypeptide reads, in one-letter code: Large ribosomal subunit protein uL16 (138 aa).

Over residues 1–13 (MLQPSRRKYRKEQ) the composition is skewed to basic residues. The disordered stretch occupies residues 1-20 (MLQPSRRKYRKEQKGRNTGL).

Belongs to the universal ribosomal protein uL16 family. Part of the 50S ribosomal subunit.

Its function is as follows. Binds 23S rRNA and is also seen to make contacts with the A and possibly P site tRNAs. The sequence is that of Large ribosomal subunit protein uL16 from Bordetella avium (strain 197N).